The following is a 249-amino-acid chain: Isoprenyl transferase (249 aa).

The active site involves D25. Position 25 (D25) interacts with Mg(2+). Residues 26–29 (GNGR), W30, R38, H42, and 70–72 (STE) each bind substrate. The active-site Proton acceptor is the N73. Substrate contacts are provided by residues W74, R76, R197, and 203–205 (RLS). Position 216 (E216) interacts with Mg(2+).

It belongs to the UPP synthase family. In terms of assembly, homodimer. It depends on Mg(2+) as a cofactor.

Functionally, catalyzes the condensation of isopentenyl diphosphate (IPP) with allylic pyrophosphates generating different type of terpenoids. The chain is Isoprenyl transferase from Streptococcus pyogenes serotype M6 (strain ATCC BAA-946 / MGAS10394).